The following is a 618-amino-acid chain: MSARPQADFDGKAFAARLSTAPGVYRMYAADDSLLYVGKAGALRKRVGSYFNGTPKNARLTSMLSQVARMDVTVTRSEAEALLLENQLIKSLSPRYNVSLRDDKSYPYVLLTREDWPRIALHRGPRAVNGRYFGPYAGVTAVRETLNLMHKLFKLRSCEDSVFRNRSRPCLQYQIGRCSAPCVDLVAAQDYQEAVRRATMFLEGKSDQLGEEIMHSMQQASEALEFERAARLRDLLSSLRSMQNRQYVDGRAADLDVLACATQSSQACVLLLSFRDGRNLGTRSFFPKTNGEDSAEEILAAFVSQYYAEHAPPREILLDREIPDAELIEAALSAAAEHKVALKWNVRGERAGYLLLASRNAQLTLVTELTSQSAQHARSEALREMLGLAEQVKRVECFDISHTMGEATVASCVVFDASGPVRGQYRRFNISGITPGDDYAAMRQAIERRFRRAVEENGVLPDVLLIDGGAGQLAQAQAALADLGIENVLLVGVAKGEERRAGHEALILADGRELRPGAASPALQFIQQVRDEAHRFAITGHRGRRQKARMTSKLEDIPGIGPRRRASLLKHFGGLVGLKAAGEAEIARVEGVNAALAARIYANLHGLALPDAAGESSP.

In terms of domain architecture, GIY-YIG spans Thr-20–Val-98. The region spanning Asp-207–Met-242 is the UVR domain.

Belongs to the UvrC family. In terms of assembly, interacts with UvrB in an incision complex.

It is found in the cytoplasm. The UvrABC repair system catalyzes the recognition and processing of DNA lesions. UvrC both incises the 5' and 3' sides of the lesion. The N-terminal half is responsible for the 3' incision and the C-terminal half is responsible for the 5' incision. The protein is UvrABC system protein C of Xanthomonas campestris pv. campestris (strain 8004).